The sequence spans 130 residues: Small ribosomal subunit protein uS9 (130 aa).

The protein belongs to the universal ribosomal protein uS9 family.

The chain is Small ribosomal subunit protein uS9 from Bacillus cytotoxicus (strain DSM 22905 / CIP 110041 / 391-98 / NVH 391-98).